A 379-amino-acid chain; its full sequence is 2-methylcitrate synthase (379 aa).

Residue His-187 coordinates substrate. The active site involves His-222. 264–268 (KVMGF) lines the CoA pocket. The active site involves His-270. Arg-279 is a binding site for substrate. The active site involves Asp-321. Positions 346 and 365 each coordinate substrate.

This sequence belongs to the citrate synthase family. As to quaternary structure, homodimer.

The enzyme catalyses propanoyl-CoA + oxaloacetate + H2O = (2S,3S)-2-methylcitrate + CoA + H(+). The catalysed reaction is oxaloacetate + acetyl-CoA + H2O = citrate + CoA + H(+). The protein operates within organic acid metabolism; propanoate degradation. It participates in carbohydrate metabolism; tricarboxylic acid cycle; isocitrate from oxaloacetate: step 1/2. Functionally, involved in the catabolism of short chain fatty acids (SCFA) via the tricarboxylic acid (TCA)(acetyl degradation route) and via the 2-methylcitrate cycle I (propionate degradation route). Catalyzes the Claisen condensation of propionyl-CoA and oxaloacetate (OAA) to yield 2-methylcitrate (2-MC) and CoA. Also catalyzes the condensation of oxaloacetate with acetyl-CoA but with a lower specificity. The chain is 2-methylcitrate synthase (gltA) from Antarctic bacterium DS2-3R.